Here is a 161-residue protein sequence, read N- to C-terminus: MLWRRAALAGTRLVWSRSGSAGWLDRAAGAAATAASGMESNTSSSLENLETAPVNQIQETISDNCVVIFSKTSCSYCTMAKKLFRDMNVNYKVVELDLLEYGNQFQDALYKMTGGRTVPRIFVNGTFIGGATDTHRLHKEGKLLPLVHQCYLKKSKRKEFQ.

Residues 1 to 19 (MLWRRAALAGTRLVWSRSG) constitute a mitochondrion transit peptide. At Ser20 the chain carries Phosphoserine. A Glutaredoxin domain is found at 54-154 (VNQIQETISD…PLVHQCYLKK (101 aa)). Cys65 is a [2Fe-2S] cluster binding site. Lys71 lines the glutathione pocket. Residue Cys74 is modified to S-glutathionyl cysteine; alternate. Cys74 and Cys77 are oxidised to a cystine. Glutathione is bound by residues Gln106 and Val118. Cys150 provides a ligand contact to [2Fe-2S] cluster.

Belongs to the glutaredoxin family. As to quaternary structure, monomer; active form. Homodimer; inactive form. The homodimer is probably linked by 1 2Fe-2S cluster.

The protein resides in the mitochondrion. With respect to regulation, the 2Fe-2S present in the homodimer leads to inactivation of the enzyme. The 2Fe-2S may serve as a redox sensor: the presence of one-electron oxidants or reductants leading to the loss of the 2Fe-2S cluster, subsequent monomerization and activation of the enzyme. Glutathione-dependent oxidoreductase that facilitates the maintenance of mitochondrial redox homeostasis upon induction of apoptosis by oxidative stress. Involved in response to hydrogen peroxide and regulation of apoptosis caused by oxidative stress. Acts as a very efficient catalyst of monothiol reactions because of its high affinity for protein glutathione-mixed disulfides. Can receive electrons not only from glutathione (GSH), but also from thioredoxin reductase supporting both monothiol and dithiol reactions. Efficiently catalyzes both glutathionylation and deglutathionylation of mitochondrial complex I, which in turn regulates the superoxide production by the complex. Overexpression decreases the susceptibility to apoptosis and prevents loss of cardiolipin and cytochrome c release. The sequence is that of Glutaredoxin-2, mitochondrial (GLRX2) from Pongo abelii (Sumatran orangutan).